Here is an 83-residue protein sequence, read N- to C-terminus: Small ribosomal subunit protein eS21 (83 aa).

Met-1 carries the post-translational modification N-acetylmethionine. Residue Lys-41 forms a Glycyl lysine isopeptide (Lys-Gly) (interchain with G-Cter in SUMO2) linkage. Lys-81 carries the post-translational modification N6-acetyllysine.

It belongs to the eukaryotic ribosomal protein eS21 family. As to quaternary structure, component of the 40S small ribosomal subunit.

It localises to the cytoplasm. The protein resides in the cytosol. It is found in the rough endoplasmic reticulum. Functionally, component of the small ribosomal subunit. The ribosome is a large ribonucleoprotein complex responsible for the synthesis of proteins in the cell. In Sus scrofa (Pig), this protein is Small ribosomal subunit protein eS21 (RPS21).